The sequence spans 230 residues: MADS-box transcription factor 50 (230 aa).

Residues 1 to 61 enclose the MADS-box domain; sequence MVRGKTQMKR…GKLYEFASAS (61 aa). Residues 86–176 form the K-box domain; the sequence is IEQVKADADG…REKCKNQPPL (91 aa). Residues 209 to 230 form a disordered region; that stretch reads GLPGRSRSSGGAAEDSQAMPHS.

Expressed in mature leaves and at low levels in roots and young panicles.

Its subcellular location is the nucleus. Functionally, probable transcription factor active in flowering time control. May control internode elongation and promote floral transition phase. May act upstream of the floral regulators MADS1, MADS14, MADS15 and MADS18 in the floral induction pathway. The sequence is that of MADS-box transcription factor 50 (MADS50) from Oryza sativa subsp. japonica (Rice).